Reading from the N-terminus, the 1405-residue chain is Centlein (1405 aa).

A compositionally biased stretch (pro residues) spans 1–14 (MAARSPPSPHPSPP). The disordered stretch occupies residues 1–79 (MAARSPPSPH…GGAAPAHAPL (79 aa)). Ala2 is modified (N-acetylalanine). Ser5 and Ser22 each carry phosphoserine. Residues 48–58 (VVADESDKIWV) show a composition bias toward basic and acidic residues. The span at 61-71 (EGSGGRRGPGG) shows a compositional bias: gly residues. Residues 95 to 126 (EEAMVTRTQLLEEELSSLKEELALCQADKEFV) are a coiled coil. Disordered regions lie at residues 421 to 450 (KLKE…QVPH) and 493 to 529 (SRKS…EELQ). 2 coiled-coil regions span residues 613 to 655 (NELA…ELNR) and 681 to 793 (KNGK…ELIN). The segment at 865–917 (WEDVSESSSDSEAQTSQTLGTIIVETSQKISPTEDGKDQKESDPTEDSQTQGK) is disordered. The span at 877–895 (AQTSQTLGTIIVETSQKIS) shows a compositional bias: polar residues. Positions 896-907 (PTEDGKDQKESD) are enriched in basic and acidic residues. The stretch at 980-1311 (NIILLRERII…IRELKKMKKN (332 aa)) forms a coiled coil. Thr1343 carries the phosphothreonine modification.

Interacts with CEP250 and CEP68. Interacts with NEK2; the interaction leads to phosphorylation of CNTLN. In terms of processing, phosphorylated directly or indirectly by NEK2.

It localises to the cytoplasm. The protein localises to the cytoskeleton. The protein resides in the microtubule organizing center. It is found in the centrosome. Its subcellular location is the centriole. Required for centrosome cohesion and recruitment of CEP68 to centrosomes. In Homo sapiens (Human), this protein is Centlein (CNTLN).